A 443-amino-acid chain; its full sequence is Ribosomal protein uS12 methylthiotransferase RimO (443 aa).

The 112-residue stretch at 5–116 (PSVAVAHLGC…IVDVIQRAEA (112 aa)) folds into the MTTase N-terminal domain. The [4Fe-4S] cluster site is built by C14, C50, C79, C154, C158, and C161. A Radical SAM core domain is found at 140-370 (TTTEGTAYVR…ALQQPISWQQ (231 aa)). The TRAM domain occupies 372-442 (QQEVGKTVQV…AYDLQGQLVS (71 aa)).

The protein belongs to the methylthiotransferase family. RimO subfamily. Requires [4Fe-4S] cluster as cofactor.

The protein resides in the cytoplasm. It carries out the reaction L-aspartate(89)-[ribosomal protein uS12]-hydrogen + (sulfur carrier)-SH + AH2 + 2 S-adenosyl-L-methionine = 3-methylsulfanyl-L-aspartate(89)-[ribosomal protein uS12]-hydrogen + (sulfur carrier)-H + 5'-deoxyadenosine + L-methionine + A + S-adenosyl-L-homocysteine + 2 H(+). Its function is as follows. Catalyzes the methylthiolation of an aspartic acid residue of ribosomal protein uS12. The polypeptide is Ribosomal protein uS12 methylthiotransferase RimO (Acaryochloris marina (strain MBIC 11017)).